Here is a 296-residue protein sequence, read N- to C-terminus: 6-hydroxypseudooxynicotine dehydrogenase complex subunit alpha (296 aa).

Residues 1 to 177 (MKPPSFDYVV…VEVNVPQLPH (177 aa)) form the FAD-binding PCMH-type domain. Residues 30–37 (IIAGGQSL), 111–115 (TIGGS), and glutamate 124 each bind FAD.

In terms of assembly, heterohexamer of 2 alpha (kdhA), 2 beta (kdhB) and 2 gamma (kdhC) subunit. Dimer of heterotrimers. It depends on FAD as a cofactor.

The enzyme catalyses 6-hydroxypseudooxynicotine + A + H2O = 2,6-dihydroxypseudooxynicotine + AH2. Its pathway is alkaloid degradation; nicotine degradation. Molybdo-flavoprotein enzyme complex involved in nicotine degradation. The subunit gamma (large subunit) contains the substrate-binding sites, the subunit alpha (medium subunit) binds FAD and the subunit beta (small subunit) has a 2Fe-2S ferredoxin-type domain which binds 2 2Fe-2S clusters. The chain is 6-hydroxypseudooxynicotine dehydrogenase complex subunit alpha (kdhA) from Paenarthrobacter nicotinovorans (Arthrobacter nicotinovorans).